The following is a 114-amino-acid chain: Ig heavy chain V region GOM (114 aa).

The Ig-like domain occupies 1–112; it reads EVQLVESGGD…YWGQGTLVTV (112 aa).

This Canis lupus familiaris (Dog) protein is Ig heavy chain V region GOM.